Consider the following 157-residue polypeptide: SsrA-binding protein (157 aa).

Positions 132–157 are disordered; that stretch reads EHDKRDTIKEREGKREVERAMKSRHR.

The protein belongs to the SmpB family.

Its subcellular location is the cytoplasm. Functionally, required for rescue of stalled ribosomes mediated by trans-translation. Binds to transfer-messenger RNA (tmRNA), required for stable association of tmRNA with ribosomes. tmRNA and SmpB together mimic tRNA shape, replacing the anticodon stem-loop with SmpB. tmRNA is encoded by the ssrA gene; the 2 termini fold to resemble tRNA(Ala) and it encodes a 'tag peptide', a short internal open reading frame. During trans-translation Ala-aminoacylated tmRNA acts like a tRNA, entering the A-site of stalled ribosomes, displacing the stalled mRNA. The ribosome then switches to translate the ORF on the tmRNA; the nascent peptide is terminated with the 'tag peptide' encoded by the tmRNA and targeted for degradation. The ribosome is freed to recommence translation, which seems to be the essential function of trans-translation. This Paracidovorax citrulli (strain AAC00-1) (Acidovorax citrulli) protein is SsrA-binding protein.